The chain runs to 118 residues: Cycloviolacin-O8 (118 aa).

The first 22 residues, 1–22 (MEMKNMVVGLFLIAAFALPALA), serve as a signal peptide directing secretion. The propeptide occupies 23–84 (TNFEKDFITH…THSNSINALG (62 aa)). Positions 85–115 (GTLPCGESCVWIPCISSVVGCSCKSKVCYKN) form a cross-link, cyclopeptide (Gly-Asn). 3 disulfide bridges follow: Cys-89–Cys-105, Cys-93–Cys-107, and Cys-98–Cys-112. The propeptide occupies 116–118 (SLA).

Cycloviolacin-O8 is a cyclic peptide. As to expression, expressed in leaves, petals, petioles and roots but not in runners (at protein level).

Probably participates in a plant defense mechanism. The polypeptide is Cycloviolacin-O8 (Voc1) (Viola odorata (Sweet violet)).